The sequence spans 184 residues: dTTP/UTP pyrophosphatase (184 aa).

The active-site Proton acceptor is the D65.

Belongs to the Maf family. YhdE subfamily. A divalent metal cation is required as a cofactor.

The protein localises to the cytoplasm. It catalyses the reaction dTTP + H2O = dTMP + diphosphate + H(+). The enzyme catalyses UTP + H2O = UMP + diphosphate + H(+). Functionally, nucleoside triphosphate pyrophosphatase that hydrolyzes dTTP and UTP. May have a dual role in cell division arrest and in preventing the incorporation of modified nucleotides into cellular nucleic acids. This Thermococcus onnurineus (strain NA1) protein is dTTP/UTP pyrophosphatase.